The sequence spans 546 residues: Membrane protein insertase YidC (546 aa).

Residues 8 to 28 (ILLATVLSVGILILWQVIFPT) form a helical membrane-spanning segment. Positions 31-70 (APPKPAHPPAAEVAKPAAPASPAPGAAAPAVPAPPPDAPE) are disordered. Positions 39–60 (PAAEVAKPAAPASPAPGAAAPA) are enriched in low complexity. Helical transmembrane passes span 326–346 (IDYG…LYVM), 356–376 (WGVA…PLTY), 422–442 (LGGC…YAAL), 459–479 (LTAH…SFVM), and 498–518 (FFPG…TLYI).

This sequence belongs to the OXA1/ALB3/YidC family. Type 1 subfamily. In terms of assembly, interacts with the Sec translocase complex via SecD. Specifically interacts with transmembrane segments of nascent integral membrane proteins during membrane integration.

It localises to the cell inner membrane. In terms of biological role, required for the insertion and/or proper folding and/or complex formation of integral membrane proteins into the membrane. Involved in integration of membrane proteins that insert both dependently and independently of the Sec translocase complex, as well as at least some lipoproteins. Aids folding of multispanning membrane proteins. The chain is Membrane protein insertase YidC from Anaeromyxobacter dehalogenans (strain 2CP-1 / ATCC BAA-258).